The sequence spans 107 residues: NADH-quinone oxidoreductase subunit K 2 (107 aa).

The next 3 membrane-spanning stretches (helical) occupy residues L3–A23, V30–F50, and I67–I87.

The protein belongs to the complex I subunit 4L family. In terms of assembly, NDH-1 is composed of 14 different subunits. Subunits NuoA, H, J, K, L, M, N constitute the membrane sector of the complex.

The protein resides in the cell membrane. The catalysed reaction is a quinone + NADH + 5 H(+)(in) = a quinol + NAD(+) + 4 H(+)(out). Its function is as follows. NDH-1 shuttles electrons from NADH, via FMN and iron-sulfur (Fe-S) centers, to quinones in the respiratory chain. The immediate electron acceptor for the enzyme in this species is believed to be a menaquinone. Couples the redox reaction to proton translocation (for every two electrons transferred, four hydrogen ions are translocated across the cytoplasmic membrane), and thus conserves the redox energy in a proton gradient. The chain is NADH-quinone oxidoreductase subunit K 2 from Symbiobacterium thermophilum (strain DSM 24528 / JCM 14929 / IAM 14863 / T).